The chain runs to 380 residues: Tetratricopeptide repeat protein 19, mitochondrial (380 aa).

A mitochondrion-targeting transit peptide spans 1–70; that stretch reads MFRLLSWSLG…AALAWFSRPA (70 aa). TPR repeat units lie at residues 136–169, 179–212, 237–270, 279–312, and 318–351; these read TYTY…LLGG, IEIS…LEEK, GMCL…SEEI, IVLM…ARQI, and HMVL…AKLK.

It belongs to the TTC19 family. Binds to the mature mitochondrial complex III dimer, after the incorporation of the Rieske protein UQCRFS1. Interacts with UQCRC1 and UQCRFS1. Interacts with ZFYVE26 and CHMP4B. In terms of processing, proteolytically cleaved by PARL.

The protein localises to the mitochondrion inner membrane. Its function is as follows. Required for the preservation of the structural and functional integrity of mitochondrial respiratory complex III by allowing the physiological turnover of the Rieske protein UQCRFS1. Involved in the clearance of UQCRFS1 N-terminal fragments, which are produced upon incorporation of UQCRFS1 into the complex III and whose presence is detrimental for its catalytic activity. The polypeptide is Tetratricopeptide repeat protein 19, mitochondrial (TTC19) (Homo sapiens (Human)).